The chain runs to 286 residues: uncharacterized protein (286 aa).

Positions 36 to 256 (ENPQHHPSIE…IKGCLLVQLK (221 aa)) constitute a Radical SAM core domain. C50, C54, and C57 together coordinate [4Fe-4S] cluster.

Requires [4Fe-4S] cluster as cofactor.

This is an uncharacterized protein from Methanocaldococcus jannaschii (strain ATCC 43067 / DSM 2661 / JAL-1 / JCM 10045 / NBRC 100440) (Methanococcus jannaschii).